A 339-amino-acid chain; its full sequence is 5-dehydro-2-deoxygluconokinase (339 aa).

Belongs to the carbohydrate kinase PfkB family.

The catalysed reaction is 5-dehydro-2-deoxy-D-gluconate + ATP = 6-phospho-5-dehydro-2-deoxy-D-gluconate + ADP + H(+). It functions in the pathway polyol metabolism; myo-inositol degradation into acetyl-CoA; acetyl-CoA from myo-inositol: step 5/7. Its function is as follows. Catalyzes the phosphorylation of 5-dehydro-2-deoxy-D-gluconate (2-deoxy-5-keto-D-gluconate or DKG) to 6-phospho-5-dehydro-2-deoxy-D-gluconate (DKGP). This Clostridium beijerinckii (strain ATCC 51743 / NCIMB 8052) (Clostridium acetobutylicum) protein is 5-dehydro-2-deoxygluconokinase.